Reading from the N-terminus, the 45-residue chain is Osteocalcin (45 aa).

The Gla domain occupies 1–41 (AAGELTLTQLESLREVCEANLACEDMMDAQGIIAAYTAYYG). Ca(2+) is bound by residues E11, E15, E18, and E24. 3 positions are modified to 4-carboxyglutamate: E11, E15, and E18. A disulfide bond links C17 and C23.

This sequence belongs to the osteocalcin/matrix Gla protein family. Gamma-carboxyglutamate residues are formed by vitamin K dependent carboxylation by GGCX. These residues are essential for the binding of calcium. In terms of tissue distribution, also found in smaller quantities in dentin.

The protein localises to the secreted. The carboxylated form is one of the main organic components of the bone matrix, which constitutes 1-2% of the total bone protein. The carboxylated form binds strongly to apatite and calcium. This chain is Osteocalcin (bglap), found in Lepomis macrochirus (Bluegill).